Reading from the N-terminus, the 228-residue chain is Ribose-5-phosphate isomerase A (228 aa).

Residues 27-30 (TGTT), 86-89 (DGAD), and 100-103 (KGMG) contribute to the substrate site. Catalysis depends on E109, which acts as the Proton acceptor. K127 contributes to the substrate binding site.

This sequence belongs to the ribose 5-phosphate isomerase family. Homodimer.

It catalyses the reaction aldehydo-D-ribose 5-phosphate = D-ribulose 5-phosphate. It functions in the pathway carbohydrate degradation; pentose phosphate pathway; D-ribose 5-phosphate from D-ribulose 5-phosphate (non-oxidative stage): step 1/1. Catalyzes the reversible conversion of ribose-5-phosphate to ribulose 5-phosphate. The chain is Ribose-5-phosphate isomerase A from Borreliella burgdorferi (strain ZS7) (Borrelia burgdorferi).